The primary structure comprises 158 residues: 2-C-methyl-D-erythritol 2,4-cyclodiphosphate synthase (158 aa).

Positions 9 and 11 each coordinate a divalent metal cation. 4-CDP-2-C-methyl-D-erythritol 2-phosphate-binding positions include 9–11 (DVH) and 35–36 (HS). His-43 provides a ligand contact to a divalent metal cation. 4-CDP-2-C-methyl-D-erythritol 2-phosphate-binding positions include 57-59 (DIG), 62-66 (FPDTD), 101-107 (AQKPKMA), 133-136 (TTTE), Phe-140, and Arg-143.

The protein belongs to the IspF family. Homotrimer. It depends on a divalent metal cation as a cofactor.

The enzyme catalyses 4-CDP-2-C-methyl-D-erythritol 2-phosphate = 2-C-methyl-D-erythritol 2,4-cyclic diphosphate + CMP. The protein operates within isoprenoid biosynthesis; isopentenyl diphosphate biosynthesis via DXP pathway; isopentenyl diphosphate from 1-deoxy-D-xylulose 5-phosphate: step 4/6. Involved in the biosynthesis of isopentenyl diphosphate (IPP) and dimethylallyl diphosphate (DMAPP), two major building blocks of isoprenoid compounds. Catalyzes the conversion of 4-diphosphocytidyl-2-C-methyl-D-erythritol 2-phosphate (CDP-ME2P) to 2-C-methyl-D-erythritol 2,4-cyclodiphosphate (ME-CPP) with a corresponding release of cytidine 5-monophosphate (CMP). This is 2-C-methyl-D-erythritol 2,4-cyclodiphosphate synthase from Bacillus cytotoxicus (strain DSM 22905 / CIP 110041 / 391-98 / NVH 391-98).